A 171-amino-acid chain; its full sequence is Small ribosomal subunit protein uS13 (171 aa).

A disordered region spans residues 128–171; the sequence is HERGQKVRGQRTKSTGRTEGTIGVNVEAIKEEQAEDDAADGGEE. Positions 160–171 are enriched in acidic residues; that stretch reads QAEDDAADGGEE.

This sequence belongs to the universal ribosomal protein uS13 family. In terms of assembly, part of the 30S ribosomal subunit. Forms a loose heterodimer with protein S19. Forms two bridges to the 50S subunit in the 70S ribosome.

Its function is as follows. Located at the top of the head of the 30S subunit, it contacts several helices of the 16S rRNA. In the 70S ribosome it contacts the 23S rRNA (bridge B1a) and protein L5 of the 50S subunit (bridge B1b), connecting the 2 subunits; these bridges are implicated in subunit movement. The chain is Small ribosomal subunit protein uS13 from Halobacterium salinarum (strain ATCC 700922 / JCM 11081 / NRC-1) (Halobacterium halobium).